Consider the following 347-residue polypeptide: FMRFamide-related peptides (347 aa).

The signal sequence occupies residues 1-22; that stretch reads MGIALMFLLALYQMQSAIHSEI. The propeptide occupies 23–102; it reads IDTPNYAGNS…RYKYDPELEA (80 aa). Residue F114 is modified to Phenylalanine amide. Y146 is subject to Tyrosine amide. A phenylalanine amide mark is found at F157, F168, F179, F190, F201, F212, F223, and F232. Positions 235–240 are excised as a propeptide; sequence SPHEEL. Phenylalanine amide occurs at positions 250 and 259. The residue at position 270 (S270) is a Serine amide. The residue at position 280 (F280) is a Phenylalanine amide. A propeptide spanning residues 283–347 is cleaved from the precursor; that stretch reads SLKPAAPESK…SVEQDQFFGQ (65 aa). Positions 283-347 are disordered; it reads SLKPAAPESK…SVEQDQFFGQ (65 aa). Basic and acidic residues predominate over residues 305–320; that stretch reads SPVDKAMTELFKKQEL. The segment covering 321–347 has biased composition (polar residues); the sequence is QDQQVKNGAQATTTQDGSVEQDQFFGQ.

Belongs to the FARP (FMRFamide related peptide) family. Post-translationally, this precursor includes 13 peptides that have FMRF or related sequences at their C-termini, and other putative neuropeptides.

The protein localises to the secreted. In terms of biological role, in insects, FMRFamide and related peptides have modulatory actions at skeletal neuromuscular junctions, and peptides that are immunologically related to FMRFamide are released into the circulation from neurohemal organs. The sequence is that of FMRFamide-related peptides from Drosophila melanogaster (Fruit fly).